Reading from the N-terminus, the 298-residue chain is (S)-ureidoglycine aminohydrolase (298 aa).

The first 20 residues, 1 to 20, serve as a signal peptide directing secretion; the sequence is MRSLYLIVFIVISLVKASKS. The Cupin type-2 domain occupies 222 to 288; the sequence is TMDFQPGEFL…ALGKTRSRYL (67 aa). 4 residues coordinate Mn(2+): E235, H237, H241, and Q275. E235 provides a ligand contact to substrate. Residues Q275, Y287, and K291 each contribute to the substrate site.

This sequence belongs to the UGHY family. As to quaternary structure, homooctamer. Mn(2+) is required as a cofactor.

The protein resides in the endoplasmic reticulum. It catalyses the reaction (S)-2-ureidoglycine + H2O = (S)-ureidoglycolate + NH4(+). Its function is as follows. Involved in the catabolism of purine nucleotides. Can use (S)-2-ureidoglycine as substrate, but not allantoate. The sequential activity of AAH, UGLYAH and UAH allows a complete purine breakdown without the intermediate generation of urea. The sequence is that of (S)-ureidoglycine aminohydrolase (UGLYAH) from Arabidopsis thaliana (Mouse-ear cress).